The primary structure comprises 365 residues: Glucose 1-dehydrogenase 1 (365 aa).

Asp-38 contacts Zn(2+). Residue Thr-40 participates in substrate binding. Positions 63 and 64 each coordinate Zn(2+). Glu-115 and Glu-151 together coordinate substrate. Glu-151 is a binding site for Zn(2+). Residues 182-185 (NGSL), 207-208 (RR), 272-274 (LGV), and 301-303 (SVN) contribute to the NADP(+) site. Asn-303 lines the substrate pocket.

The protein belongs to the zinc-containing alcohol dehydrogenase family. Glucose 1-dehydrogenase subfamily. Zn(2+) serves as cofactor.

It catalyses the reaction D-glucose + NAD(+) = D-glucono-1,5-lactone + NADH + H(+). It carries out the reaction D-glucose + NADP(+) = D-glucono-1,5-lactone + NADPH + H(+). Catalyzes the NAD(P)(+)-dependent oxidation of D-glucose to D-gluconate via gluconolactone. Can utilize both NAD(+) and NADP(+) as electron acceptor. Is involved in the degradation of glucose through a modified Entner-Doudoroff pathway. This is Glucose 1-dehydrogenase 1 from Haloterrigena turkmenica (strain ATCC 51198 / DSM 5511 / JCM 9101 / NCIMB 13204 / VKM B-1734 / 4k) (Halococcus turkmenicus).